The sequence spans 151 residues: Minor curlin subunit (151 aa).

Residues 1 to 21 form the signal peptide; it reads MKNKLLFMMLTILGAPGIAAA.

It belongs to the CsgA/CsgB family.

Its subcellular location is the fimbrium. Curlin is the structural subunit of the curli. Curli are coiled surface structures that assemble preferentially at growth temperatures below 37 degrees Celsius. Curli can bind to fibronectin. The minor subunit is the nucleation component of curlin monomers. The protein is Minor curlin subunit (csgB) of Escherichia coli O157:H7.